Reading from the N-terminus, the 859-residue chain is Nitrate reductase [NADPH] (859 aa).

Cysteine 137 serves as a coordination point for Mo-molybdopterin. Positions 502–578 constitute a Cytochrome b5 heme-binding domain; the sequence is DVVIKYSEFE…LPSMHLGRLE (77 aa). Residues histidine 538 and histidine 561 each coordinate heme. Residues 602–713 form the FAD-binding FR-type domain; the sequence is RKWHKITLAE…KGPVGEFEYV (112 aa). Residues 655-658, 672-676, phenylalanine 677, 687-689, serine 737, and threonine 740 contribute to the FAD site; these read RAYT, LIKVY, and IMT. Position 829–838 (829–838) interacts with NADP(+); it reads MLLVCGPPGM.

This sequence belongs to the nitrate reductase family. Homodimer. FAD is required as a cofactor. Requires heme as cofactor. The cofactor is Mo-molybdopterin.

It catalyses the reaction nitrite + NADP(+) + H2O = nitrate + NADPH + H(+). Nitrate reductase is a key enzyme involved in the first step of nitrate assimilation in plants, fungi and bacteria. This Pichia angusta (Yeast) protein is Nitrate reductase [NADPH] (YNR1).